Reading from the N-terminus, the 370-residue chain is DNA replication and repair protein RecF (370 aa).

Residue 30-37 (GENAQGKT) participates in ATP binding.

This sequence belongs to the RecF family.

Its subcellular location is the cytoplasm. The RecF protein is involved in DNA metabolism; it is required for DNA replication and normal SOS inducibility. RecF binds preferentially to single-stranded, linear DNA. It also seems to bind ATP. This chain is DNA replication and repair protein RecF, found in Listeria welshimeri serovar 6b (strain ATCC 35897 / DSM 20650 / CCUG 15529 / CIP 8149 / NCTC 11857 / SLCC 5334 / V8).